The primary structure comprises 402 residues: Flavohemoprotein (402 aa).

In terms of domain architecture, Globin spans 1-138 (MLSPEVRALV…LADLLIGRER (138 aa)). Histidine 85 contacts heme b. Catalysis depends on charge relay system residues tyrosine 95 and glutamate 137. The tract at residues 149–402 (GGWTGWRAFK…AEVFGTGGVA (254 aa)) is reductase. The FAD-binding FR-type domain occupies 152–261 (TGWRAFKVVR…SPPQGDFTLD (110 aa)). FAD contacts are provided by residues tyrosine 190 and 206–209 (RQYS). 274–279 (GVGLTP) lines the NADP(+) pocket. 395–398 (VFGT) contributes to the FAD binding site.

Belongs to the globin family. Two-domain flavohemoproteins subfamily. It in the C-terminal section; belongs to the flavoprotein pyridine nucleotide cytochrome reductase family. The cofactor is heme b. Requires FAD as cofactor.

It catalyses the reaction 2 nitric oxide + NADPH + 2 O2 = 2 nitrate + NADP(+) + H(+). It carries out the reaction 2 nitric oxide + NADH + 2 O2 = 2 nitrate + NAD(+) + H(+). Its function is as follows. Is involved in NO detoxification in an aerobic process, termed nitric oxide dioxygenase (NOD) reaction that utilizes O(2) and NAD(P)H to convert NO to nitrate, which protects the bacterium from various noxious nitrogen compounds. Therefore, plays a central role in the inducible response to nitrosative stress. The sequence is that of Flavohemoprotein from Bordetella bronchiseptica (strain ATCC BAA-588 / NCTC 13252 / RB50) (Alcaligenes bronchisepticus).